A 359-amino-acid polypeptide reads, in one-letter code: Phospho-N-acetylmuramoyl-pentapeptide-transferase (359 aa).

10 consecutive transmembrane segments (helical) span residues 21–41 (YITFRTIYASLTAFLICFLLG), 73–93 (TMGGLLIVFSVLVACLLWADL), 98–118 (IWVTLAALAGFTTIGFIDDYL), 143–163 (GICLLIFAASDTNTVLLVPFF), 166–186 (VAPDLGLFYIVLGVFVIVGTS), 202–222 (PLVISFVAYMVFAYVAGNAII), 237–257 (VTVFCGAMAGGLMGFLWFNAY), 261–281 (IFMGDVGSLSLGGALGTVAII), 286–306 (ILLTLVGGLFVVETLSVIFQV), and 336–356 (KIIVRFWIIAIALALIAVSTL).

The protein belongs to the glycosyltransferase 4 family. MraY subfamily. It depends on Mg(2+) as a cofactor.

The protein localises to the cell inner membrane. The catalysed reaction is UDP-N-acetyl-alpha-D-muramoyl-L-alanyl-gamma-D-glutamyl-meso-2,6-diaminopimeloyl-D-alanyl-D-alanine + di-trans,octa-cis-undecaprenyl phosphate = di-trans,octa-cis-undecaprenyl diphospho-N-acetyl-alpha-D-muramoyl-L-alanyl-D-glutamyl-meso-2,6-diaminopimeloyl-D-alanyl-D-alanine + UMP. The protein operates within cell wall biogenesis; peptidoglycan biosynthesis. Functionally, catalyzes the initial step of the lipid cycle reactions in the biosynthesis of the cell wall peptidoglycan: transfers peptidoglycan precursor phospho-MurNAc-pentapeptide from UDP-MurNAc-pentapeptide onto the lipid carrier undecaprenyl phosphate, yielding undecaprenyl-pyrophosphoryl-MurNAc-pentapeptide, known as lipid I. The sequence is that of Phospho-N-acetylmuramoyl-pentapeptide-transferase from Desulfosudis oleivorans (strain DSM 6200 / JCM 39069 / Hxd3) (Desulfococcus oleovorans).